Here is a 471-residue protein sequence, read N- to C-terminus: Glutamate--tRNA ligase (471 aa).

Residues 9 to 19 (PSPTGYLHVGG) carry the 'HIGH' region motif. Zn(2+) is bound by residues Cys98, Cys100, Cys125, and His127. The short motif at 237 to 241 (KLSKR) is the 'KMSKS' region element. Lys240 contributes to the ATP binding site.

The protein belongs to the class-I aminoacyl-tRNA synthetase family. Glutamate--tRNA ligase type 1 subfamily. In terms of assembly, monomer. Zn(2+) is required as a cofactor.

The protein localises to the cytoplasm. It catalyses the reaction tRNA(Glu) + L-glutamate + ATP = L-glutamyl-tRNA(Glu) + AMP + diphosphate. Functionally, catalyzes the attachment of glutamate to tRNA(Glu) in a two-step reaction: glutamate is first activated by ATP to form Glu-AMP and then transferred to the acceptor end of tRNA(Glu). The sequence is that of Glutamate--tRNA ligase from Escherichia coli (strain SMS-3-5 / SECEC).